The primary structure comprises 410 residues: Peptidase T (410 aa).

His-79 is a Zn(2+) binding site. Residue Asp-81 is part of the active site. Position 142 (Asp-142) interacts with Zn(2+). Catalysis depends on Glu-176, which acts as the Proton acceptor. Zn(2+) is bound by residues Glu-177, Asp-199, and His-381.

This sequence belongs to the peptidase M20B family. Requires Zn(2+) as cofactor.

It localises to the cytoplasm. The enzyme catalyses Release of the N-terminal residue from a tripeptide.. In terms of biological role, cleaves the N-terminal amino acid of tripeptides. In Listeria monocytogenes serotype 4b (strain CLIP80459), this protein is Peptidase T.